We begin with the raw amino-acid sequence, 161 residues long: MSIVTKSIVNADAEARYLSPGELDRIKAFVTGGAARLRIAETLTGSRETIVKQAGDRLFQKRPDIVSPGGNAYGEEMTATCLRDMDYYLRLVTYGVVSGDVTPIEEIGLVGVREMYRSLGTPIEAVAQSVREMKEVASGLMSSDDAAEASAYFDFVIGAMS.

Residue N71 is modified to N4-methylasparagine. (2R,3E)-phycocyanobilin is bound at residue C81.

This sequence belongs to the phycobiliprotein family. Heterodimer of an alpha and a beta chain. Contains one covalently linked phycocyanobilin chromophore.

The protein resides in the cellular thylakoid membrane. Light-harvesting photosynthetic bile pigment-protein from the phycobiliprotein complex. Allophycocyanin has a maximum absorption at approximately 650 nanometers. In Synechocystis sp. (strain PCC 6714) (Aphanocapsa sp. (strain PCC 6714)), this protein is Allophycocyanin alpha chain (apcA).